We begin with the raw amino-acid sequence, 476 residues long: Zinc transporter SLC39A7 (476 aa).

The helical transmembrane segment at 7 to 27 threads the bilayer; sequence APHWVAVGLLTWAALGLLVAG. Over residues 35–109 the composition is skewed to basic and acidic residues; that stretch reads HKDVEEDFHG…SHGHSHDSLH (75 aa). The segment at 35 to 131 is disordered; the sequence is HKDVEEDFHG…HGTSREAGAP (97 aa). His73 is modified (pros-methylhistidine). A compositionally biased stretch (basic residues) spans 110–120; it reads HGGHGHAHREH. 3 helical membrane-spanning segments follow: residues 146–166, 177–197, and 222–242; these read ALGATVLISAAPFFVLFLIPV, LQILLSFASGGLLGDAFLHLI, and GPILSVGLWVLSGIVAFLVVE. Positions 249–320 are disordered; it reads KGGHGHSHGH…QSPEEEKAGS (72 aa). Residues 257–292 show a composition bias toward basic and acidic residues; sequence GHGDRHAHGDSHTHGDRHECSSKEKPSTEEEKEVGG. Ser283 carries the phosphoserine modification. Helical transmembrane passes span 393–413 and 417–437; these read VTAIGALAGTACALLTEGGAV and VAGGAGPGWVLPFTAGGFIYV.

The protein belongs to the ZIP transporter (TC 2.A.5) family. KE4/Catsup subfamily. As to quaternary structure, homodimer. Methylation at some His residue by METTL9 leads to reduced zinc-binding. Post-translationally, rapidly phosphorylated by CK2 following Zn(2+) treatment. This phosphorylation is required for efficient cytosolic Zn(2+) release. Widely expressed. Highly expressed in the intestinal crypts.

It is found in the endoplasmic reticulum membrane. It localises to the golgi apparatus. The protein localises to the cis-Golgi network membrane. It carries out the reaction Zn(2+)(in) = Zn(2+)(out). Functionally, transports Zn(2+) from the endoplasmic reticulum (ER)/Golgi apparatus to the cytosol, playing an essential role in the regulation of cytosolic zinc levels. Acts as a gatekeeper of zinc release from intracellular stores, requiring post-translational activation by phosphorylation, resulting in activation of multiple downstream pathways leading to cell growth and proliferation. Has an essential role in B cell development and is required for proper B cell receptor signaling. Plays an important role in maintaining intestinal epithelial homeostasis and skin dermis development by regulating ER function. Controls cell signaling pathways involved in glucose metabolism in skeletal muscle. Has a protective role against ER stress in different biological contexts. Mediates Zn(2+)-induced ferroptosis. In Mus musculus (Mouse), this protein is Zinc transporter SLC39A7 (Slc39a7).